The primary structure comprises 305 residues: MNQIQVFISGLILLLPGAVDSYVEVKGVVGHPVTLPCTYSTYRGITTTCWGRGQCPSSACQNTLIWTNGHRVTYQKSSRYNLKGHISEGDVSLTIENSVESDSGLYCCRVEIPGWFNDQKVTFSLQVKPEIPTRPPTRPTTTRPTATGRPTTISTRSTHVPTSIRVSTSTPPTSTHTWTHKPEPTTFCPHETTAEVTGIPSHTPTDWNGTVTSSGDTWSNHTEAIPPGKPQKNPTKGFYVGICIAALLLLLLVSTVAITRYILMKRKSASLSVVAFRVSKIEALQNAAVVHSRAEDNIYIVEDRP.

Residues 1 to 21 form the signal peptide; that stretch reads MNQIQVFISGLILLLPGAVDS. The Ig-like V-type domain maps to 22-122; it reads YVEVKGVVGH…PGWFNDQKVT (101 aa). Over 22–237 the chain is Extracellular; sequence YVEVKGVVGH…GKPQKNPTKG (216 aa). Cystine bridges form between Cys-37/Cys-108, Cys-49/Cys-60, and Cys-55/Cys-107. The tract at residues 129–185 is disordered; the sequence is PEIPTRPPTRPTTTRPTATGRPTTISTRSTHVPTSIRVSTSTPPTSTHTWTHKPEPT. Low complexity-rich tracts occupy residues 139 to 152 and 161 to 177; these read PTTTRPTATGRPTT and PTSIRVSTSTPPTSTHT. Residue Asn-208 is glycosylated (N-linked (GlcNAc...) asparagine). Residues 238–258 form a helical membrane-spanning segment; sequence FYVGICIAALLLLLLVSTVAI. The Cytoplasmic portion of the chain corresponds to 259-305; that stretch reads TRYILMKRKSASLSVVAFRVSKIEALQNAAVVHSRAEDNIYIVEDRP.

This sequence belongs to the immunoglobulin superfamily. TIM family. In terms of assembly, interacts with STAM. Interacts with SELPLG. As to expression, expressed by stimulated T-cells. Expressed during primary antigen stimulation. Expressed at higher levels on B rather than T-cells, both constitutively and after activation.

It is found in the cell membrane. Its function is as follows. Phosphatidylserine receptor that plays an important functional role in regulatory B-cells homeostasis including generation, expansion and suppressor functions. As P-selectin/SELPLG ligand, plays a specialized role in activated but not naive T-cell trafficking during inflammatory responses. Controls thereby T-cell accumulation in the inflamed central nervous system (CNS) and the induction of autoimmune disease. Also regulates expression of various anti-inflammatory cytokines and co-inhibitory ligands including IL10. Acts as a regulator of T-cell proliferation. May play a role in kidney injury and repair. This is Hepatitis A virus cellular receptor 1 homolog (Havcr1) from Mus musculus (Mouse).